A 107-amino-acid chain; its full sequence is Nucleoid-associated protein GOX0603 (107 aa).

The protein belongs to the YbaB/EbfC family. As to quaternary structure, homodimer.

The protein localises to the cytoplasm. It is found in the nucleoid. In terms of biological role, binds to DNA and alters its conformation. May be involved in regulation of gene expression, nucleoid organization and DNA protection. The protein is Nucleoid-associated protein GOX0603 of Gluconobacter oxydans (strain 621H) (Gluconobacter suboxydans).